A 428-amino-acid chain; its full sequence is Immunoglobulin superfamily member 11 (428 aa).

Positions 1–22 (MTRRRSALASWLLLSLLGVAAS) are cleaved as a signal peptide. Residues 23–136 (LEVSESPGSV…DRGGRNIGVT (114 aa)) form the Ig-like V-type domain. Over 23-239 (LEVSESPGSV…LQVISPQPRS (217 aa)) the chain is Extracellular. Disulfide bonds link cysteine 44/cysteine 120 and cysteine 165/cysteine 215. Asparagine 102 is a glycosylation site (N-linked (GlcNAc...) asparagine). The Ig-like C2-type domain maps to 144–234 (PSAPNCQIQG…TCLLDLQVIS (91 aa)). A helical transmembrane segment spans residues 240-260 (VGVIAGAVGTGAVLIVICLAL). The Cytoplasmic portion of the chain corresponds to 261-428 (TSGAFFYWRS…PAQSRAGSLV (168 aa)). Residue arginine 375 is modified to Omega-N-methylarginine.

N-glycosylated.

It localises to the cell membrane. Functionally, functions as a cell adhesion molecule through homophilic interaction. Stimulates cell growth. The sequence is that of Immunoglobulin superfamily member 11 (Igsf11) from Rattus norvegicus (Rat).